The sequence spans 279 residues: DegV domain-containing protein CPE1310 (279 aa).

Residues 4-277 enclose the DegV domain; that stretch reads IKIITDSTCD…PKVCALFYVE (274 aa). Residues Thr-62 and Ser-94 each contribute to the hexadecanoate site.

Functionally, may bind long-chain fatty acids, such as palmitate, and may play a role in lipid transport or fatty acid metabolism. The chain is DegV domain-containing protein CPE1310 from Clostridium perfringens (strain 13 / Type A).